The sequence spans 250 residues: Electron transfer flavoprotein subunit beta (250 aa).

This sequence belongs to the ETF beta-subunit/FixA family. As to quaternary structure, heterodimer of an alpha and a beta subunit. Requires FAD as cofactor. It depends on AMP as a cofactor.

It localises to the mitochondrion matrix. In terms of biological role, the electron transfer flavoprotein serves as a specific electron acceptor for several dehydrogenases, including five acyl-CoA dehydrogenases, glutaryl-CoA and sarcosine dehydrogenase. It transfers the electrons to the main mitochondrial respiratory chain via ETF-ubiquinone oxidoreductase (ETF dehydrogenase). The chain is Electron transfer flavoprotein subunit beta (etfb) from Dictyostelium discoideum (Social amoeba).